A 65-amino-acid polypeptide reads, in one-letter code: uncharacterized protein (65 aa).

Residues 1–65 (MIALSVCWQI…ETGIGYRFML (65 aa)) constitute a DNA-binding region (ompR/PhoB-type).

This is an uncharacterized protein from Escherichia coli (strain K12).